Here is a 61-residue protein sequence, read N- to C-terminus: Large ribosomal subunit protein uL30 (61 aa).

This sequence belongs to the universal ribosomal protein uL30 family. Part of the 50S ribosomal subunit.

The chain is Large ribosomal subunit protein uL30 from Parafrankia sp. (strain EAN1pec).